A 373-amino-acid polypeptide reads, in one-letter code: Flagellar P-ring protein (373 aa).

The signal sequence occupies residues 1–28; the sequence is MPRVSTHLVKLAAAALCALLLSAVAASA.

This sequence belongs to the FlgI family. As to quaternary structure, the basal body constitutes a major portion of the flagellar organelle and consists of four rings (L,P,S, and M) mounted on a central rod.

It localises to the periplasm. The protein localises to the bacterial flagellum basal body. Its function is as follows. Assembles around the rod to form the L-ring and probably protects the motor/basal body from shearing forces during rotation. The chain is Flagellar P-ring protein from Rhodopseudomonas palustris (strain ATCC BAA-98 / CGA009).